The primary structure comprises 434 residues: Homogentisate 1,2-dioxygenase (434 aa).

His289 acts as the Proton acceptor in catalysis. The Fe cation site is built by His332 and Glu338. The homogentisate site is built by Tyr347 and His368. Fe cation is bound at residue His368.

The protein belongs to the homogentisate dioxygenase family. As to quaternary structure, hexamer; dimer of trimers. Fe cation is required as a cofactor.

The catalysed reaction is homogentisate + O2 = 4-maleylacetoacetate + H(+). The protein operates within amino-acid degradation; L-phenylalanine degradation; acetoacetate and fumarate from L-phenylalanine: step 4/6. In terms of biological role, involved in the catabolism of homogentisate (2,5-dihydroxyphenylacetate or 2,5-OH-PhAc), a central intermediate in the degradation of phenylalanine and tyrosine. Catalyzes the oxidative ring cleavage of the aromatic ring of homogentisate to yield maleylacetoacetate. The polypeptide is Homogentisate 1,2-dioxygenase (Pseudomonas syringae pv. syringae (strain B728a)).